We begin with the raw amino-acid sequence, 723 residues long: MVLRLRVHSFYNRGISFLVSSSLRNLSTASSLFLNSDQTITEPLVKSELEALVLKQYSHGKFYSLVKNAVSLPCVLLAACQNLSLSANSSGDLADRVSRRFSIEEMGREIREGRFDIRSCCVEFISSSLVLPNLKLKVLIEAIRMVLEIVYDDRFATFSYGGRVGMGRHTAIRYLKNSVENPRWWFRVSFAREMFEERNVDILCGFVGEKINDVMLIEMIKKLFEFGILKIELGGCNSGRGFPQECGLCSILINVYFDGLDKEIQDLRLKMKVKNPRVGTGDEESTGNVFFKPVNIYAVRYLDEILVITSGSKMLTMDLKKRIVDILEQRLELRVDRLNTSIHSAVSEKINFLGMYLQAVPPSVLRPPKSEKAVRAMKKYQRQKDVRKLELRNARERNRKTLGLKIFRHVLKKIKQSNGFKFEGEIENEVRDIFQSWGEEVMQDFMGSLEERWKWHWLLTRGDFLSLRHIREKLPQDLIDAYDEFQEQVDKHLAPTQAKKVLEDEERRVEEEEEQRYAERTVEDLTKLCMKVSAPEELVRKAIKLVGFTNSMGRPRPIIHLVTLEDSDIIKWYARHEKHGSTKKLIRHYTKDLRVSDLDGREEAHFPSEREVKMMGDKNLSDPKPVDGTLSLLLIRLASDEPLHHCAASFCERSDTIMHRVHLLQNRLHINPLDEEKWVPGMGTIHSALNRKCLPLCSTHISDVYLGKITLQDVDSSSFIDLR.

A mitochondrion-targeting transit peptide spans 1–26; the sequence is MVLRLRVHSFYNRGISFLVSSSLRNL. The tract at residues 532–597 is intron maturase type-2; degenerate; sequence VSAPEELVRK…HYTKDLRVSD (66 aa). A THAP-type zinc finger spans residues 646–700; sequence CAASFCERSDTIMHRVHLLQNRLHINPLDEEKWVPGMGTIHSALNRKCLPLCSTH.

Belongs to the plant nuclear intron maturase (nMat) family.

Its subcellular location is the mitochondrion. Functionally, nuclear-encoded maturase required for splicing of group-II introns in mitochondria. Necessary for mitochondrial biogenesis during early developmental stages. This Arabidopsis thaliana (Mouse-ear cress) protein is Nuclear intron maturase 3, mitochondrial.